The following is a 449-amino-acid chain: tRNA-2-methylthio-N(6)-dimethylallyladenosine synthase (449 aa).

In terms of domain architecture, MTTase N-terminal spans 3-124; the sequence is KMLYIKTYGC…LPTMLEKLDS (122 aa). Residues C12, C48, C87, C163, C167, and C170 each contribute to the [4Fe-4S] cluster site. The 232-residue stretch at 149–380 folds into the Radical SAM core domain; the sequence is KSPTVSGLVS…QAQLMLQQLE (232 aa). A TRAM domain is found at 383–447; it reads QKLIGKVVPV…ASSLFGEVCP (65 aa).

Belongs to the methylthiotransferase family. MiaB subfamily. In terms of assembly, monomer. [4Fe-4S] cluster is required as a cofactor.

It localises to the cytoplasm. It catalyses the reaction N(6)-dimethylallyladenosine(37) in tRNA + (sulfur carrier)-SH + AH2 + 2 S-adenosyl-L-methionine = 2-methylsulfanyl-N(6)-dimethylallyladenosine(37) in tRNA + (sulfur carrier)-H + 5'-deoxyadenosine + L-methionine + A + S-adenosyl-L-homocysteine + 2 H(+). In terms of biological role, catalyzes the methylthiolation of N6-(dimethylallyl)adenosine (i(6)A), leading to the formation of 2-methylthio-N6-(dimethylallyl)adenosine (ms(2)i(6)A) at position 37 in tRNAs that read codons beginning with uridine. This chain is tRNA-2-methylthio-N(6)-dimethylallyladenosine synthase, found in Orientia tsutsugamushi (strain Boryong) (Rickettsia tsutsugamushi).